The sequence spans 105 residues: uncharacterized protein (105 aa).

The next 3 membrane-spanning stretches (helical) occupy residues 14–34, 41–61, and 80–100; these read ILLM…IVAW, ETVC…FAFL, and VGFT…IFTI.

Its subcellular location is the cell membrane. This is an uncharacterized protein from Treponema pallidum (strain Nichols).